The following is a 259-amino-acid chain: Global transcriptional regulator CodY (259 aa).

The interval Met-1–Leu-155 is GAF domain. A DNA-binding region (H-T-H motif) is located at residues Ala-203 to Arg-222. A Phosphoserine modification is found at Ser-215.

This sequence belongs to the CodY family.

It is found in the cytoplasm. In terms of biological role, DNA-binding global transcriptional regulator which is involved in the adaptive response to starvation and acts by directly or indirectly controlling the expression of numerous genes in response to nutrient availability. During rapid exponential growth, CodY is highly active and represses genes whose products allow adaptation to nutrient depletion. This is Global transcriptional regulator CodY from Bacillus licheniformis (strain ATCC 14580 / DSM 13 / JCM 2505 / CCUG 7422 / NBRC 12200 / NCIMB 9375 / NCTC 10341 / NRRL NRS-1264 / Gibson 46).